Consider the following 761-residue polypeptide: Wall-associated receptor kinase-like 4 (761 aa).

The signal sequence occupies residues 1-26 (MKKETQNLQCIPLVISVLSLFGVSSA). Residues 27-349 (RKPPYLCNRV…EPKKPGQIKP (323 aa)) are Extracellular-facing. 5 N-linked (GlcNAc...) asparagine glycosylation sites follow: N64, N166, N206, N226, and N262. The atypical EGF-like stretch occupies residues 278–339 (CVCSYGYFSG…CVNKPGWFTC (62 aa)). Cystine bridges form between C280–C293, C316–C330, and C325–C339. Residues 350–370 (VFQGVLIGSALLLFAFGIFGL) form a helical membrane-spanning segment. Residues 371 to 761 (YKFIKKQRRS…VEPLVPLRTW (391 aa)) lie on the Cytoplasmic side of the membrane. The Protein kinase domain occupies 424–697 (FNTNRVLGQG…REVSVELERI (274 aa)). Residues 430-438 (LGQGGQGTV) and K452 contribute to the ATP site. The residue at position 497 (Y497) is a Phosphotyrosine. D549 (proton acceptor) is an active-site residue. Phosphothreonine is present on residues T583 and T588. Residue Y596 is modified to Phosphotyrosine. The disordered stretch occupies residues 701-761 (SYKSEIHNDD…VEPLVPLRTW (61 aa)). Acidic residues predominate over residues 708-732 (NDDDDDDDDDDEDDQAMELNIEETW).

The protein belongs to the protein kinase superfamily. Ser/Thr protein kinase family. In terms of tissue distribution, expressed in the whole plant. Detected in root-shoot junctions and lateral root initiation sites.

It localises to the membrane. It carries out the reaction L-seryl-[protein] + ATP = O-phospho-L-seryl-[protein] + ADP + H(+). The enzyme catalyses L-threonyl-[protein] + ATP = O-phospho-L-threonyl-[protein] + ADP + H(+). Functionally, serine/threonine-protein kinase that may function as a signaling receptor of extracellular matrix component. Plays a role in plant mineral nutrients response. The protein is Wall-associated receptor kinase-like 4 (WAKL4) of Arabidopsis thaliana (Mouse-ear cress).